The following is a 535-amino-acid chain: Probable fucosyltransferase 4 (535 aa).

The Cytoplasmic portion of the chain corresponds to 1–20; it reads MYHIFQISGEVIKGLGLKTK. A helical; Signal-anchor for type II membrane protein transmembrane segment spans residues 21–41; the sequence is ILITIVFSTLLILSVMLLSFS. The Lumenal portion of the chain corresponds to 42–535; the sequence is NNFNNKLFAA…IWGLKLFDEL (494 aa). N-linked (GlcNAc...) asparagine glycans are attached at residues Asn136, Asn226, Asn230, Asn377, and Asn409.

The protein belongs to the glycosyltransferase 37 family. As to expression, expressed in roots, stems, leaves, flowers, siliques and seedlings.

The protein resides in the golgi apparatus. It localises to the golgi stack membrane. It functions in the pathway protein modification; protein glycosylation. May be involved in cell wall biosynthesis. May act as a fucosyltransferase. This chain is Probable fucosyltransferase 4 (FUT4), found in Arabidopsis thaliana (Mouse-ear cress).